We begin with the raw amino-acid sequence, 263 residues long: Hydroxyacylglutathione hydrolase (263 aa).

Zn(2+) is bound by residues His60, His62, Asp64, His65, His120, Asp137, and His175.

The protein belongs to the metallo-beta-lactamase superfamily. Glyoxalase II family. Monomer. Requires Zn(2+) as cofactor.

It catalyses the reaction an S-(2-hydroxyacyl)glutathione + H2O = a 2-hydroxy carboxylate + glutathione + H(+). It functions in the pathway secondary metabolite metabolism; methylglyoxal degradation; (R)-lactate from methylglyoxal: step 2/2. Thiolesterase that catalyzes the hydrolysis of S-D-lactoyl-glutathione to form glutathione and D-lactic acid. In Shewanella pealeana (strain ATCC 700345 / ANG-SQ1), this protein is Hydroxyacylglutathione hydrolase.